A 65-amino-acid chain; its full sequence is VESP-VB2 (65 aa).

Positions 1–23 (MKMSILFLFALIASLACLQLTFA) are cleaved as a signal peptide. 7 AXPX repeats span residues 23-26 (AAPA), 27-30 (ASPF), 31-34 (ANPG), 35-38 (ASPE), 39-42 (AAPL), 43-46 (ADPL), and 47-50 (ADPF). Residues 24 to 49 (APAASPFANPGASPEAAPLADPLADP) constitute a propeptide that is removed on maturation. Position 62 is a leucine amide (leucine 62).

Belongs to the MCD family. Mastoparan subfamily. Expressed by the venom gland.

The protein resides in the secreted. Antimicrobial peptide. Shows activity against both Gram-positive and -negative bacteria, as well against fungi. Also promotes important mast cell degranulation. Shows little hemolytic activity on rabbit and human erythrocytes. Its mast cell degranulation activity may be related to the activation of G-protein coupled receptors in mast cells as well as interaction with other proteins located in cell endosomal membranes in the mast cells. The protein is VESP-VB2 of Vespa bicolor (Black shield wasp).